The sequence spans 511 residues: Aprataxin and PNK-like factor (511 aa).

An FHA-like domain is found at 1–108 (MSGGFELQPR…RILSIPSEVE (108 aa)). Residue Ser-116 is modified to Phosphoserine; by ATM. Residue Ser-149 is modified to Phosphoserine. Residues 182–191 (RKRILPTWML) carry the KBM motif. Positions 223–370 (KSQLNTTQQG…ATDSVLQGSE (148 aa)) are disordered. Composition is skewed to polar residues over residues 225 to 249 (QLNT…SAEQ) and 263 to 293 (STIS…NAQR). Positions 304 to 315 (VSKHKIATKRTP) are enriched in basic residues. Positions 324-344 (CSENCSSAQGDSLQDESQGSH) are enriched in polar residues. Low complexity predominate over residues 345–355 (SESSSNPSNPE). Positions 376, 381, 386, and 387 each coordinate a glycoprotein. The PBZ-type 1 zinc-finger motif lies at 377-398 (TSCMYGANCYRKNPVHFQHFSH). Residues 406–416 (GVQIVGQDETD) form a flexible linker region. A PBZ-type 2 zinc finger spans residues 419–440 (PECPYGPSCYRKNPQHKIEYRH). The a glycoprotein site is built by Tyr-423, Tyr-428, and Arg-429. Residues 449–497 (LDEDNDNVGQPNEYDLNDSFLDDEEEDYEPTDEDSDWEPGKEDEEKEDV) form a disordered region. Acidic residues predominate over residues 468 to 497 (FLDDEEEDYEPTDEDSDWEPGKEDEEKEDV). Positions 476-500 (YEPTDEDSDWEPGKEDEEKEDVEEL) match the NAP1L motif motif. A coiled-coil region spans residues 487–511 (PGKEDEEKEDVEELLKEAKRFMKRK).

This sequence belongs to the APLF family. In terms of assembly, interacts with LIG4. Interacts with PARP1. Interacts with XRCC4. Interacts (via KBM motif) with XRCC5 and XRCC6; promoting recruitment to DNA damage sites. Interacts with XRCC1. Interacts (via C-terminal disordered region) with histones; interacts with histone H2A, H2B and H3-H4. Post-translationally, poly-ADP-ribosylated. In addition to binding non covalently poly-ADP-ribose via its PBZ-type zinc fingers, the protein is also covalently poly-ADP-ribosylated by PARP1. Phosphorylated in an ATM-dependent manner upon double-strand DNA break.

It is found in the nucleus. It localises to the chromosome. The protein localises to the cytoplasm. The protein resides in the cytosol. Histone chaperone involved in single-strand and double-strand DNA break repair. Recruited to sites of DNA damage through interaction with branched poly-ADP-ribose chains, a polymeric post-translational modification synthesized transiently at sites of chromosomal damage to accelerate DNA strand break repair reactions. Following recruitment to DNA damage sites, acts as a histone chaperone that mediates histone eviction during DNA repair and promotes recruitment of histone variant MACROH2A1. Also has a nuclease activity: displays apurinic-apyrimidinic (AP) endonuclease and 3'-5' exonuclease activities in vitro. Also able to introduce nicks at hydroxyuracil and other types of pyrimidine base damage. Together with PARP3, promotes the retention of the LIG4-XRCC4 complex on chromatin and accelerate DNA ligation during non-homologous end-joining (NHEJ). Also acts as a negative regulator of cell pluripotency by promoting histone exchange. Required for the embryo implantation during the epithelial to mesenchymal transition in females. The protein is Aprataxin and PNK-like factor of Homo sapiens (Human).